We begin with the raw amino-acid sequence, 190 residues long: Transcription antitermination protein NusB (190 aa).

The interval 158-190 (AGTSEDHVPQREPAAGQLGQDDSNGGQVAAVCR) is disordered.

It belongs to the NusB family.

Functionally, involved in transcription antitermination. Required for transcription of ribosomal RNA (rRNA) genes. Binds specifically to the boxA antiterminator sequence of the ribosomal RNA (rrn) operons. The chain is Transcription antitermination protein NusB from Mycobacterium leprae (strain TN).